We begin with the raw amino-acid sequence, 256 residues long: Putative transposase for insertion sequence element IS112 (256 aa).

The protein belongs to the transposase 11 family.

Involved in the transposition of the insertion sequence IS112 which inactivates the SalI restriction-modification system. This is Putative transposase for insertion sequence element IS112 from Streptomyces albus G.